We begin with the raw amino-acid sequence, 488 residues long: Dipeptide and tripeptide permease B (488 aa).

Over 1 to 27 the chain is Cytoplasmic; the sequence is MSKTASVGLWDQPKPFFMIFFVELWER. Residues 28 to 48 traverse the membrane as a helical segment; it reads FGFYGVQGILAIYFVQQLGFS. Topologically, residues 49–52 are periplasmic; that stretch reads EEQS. A helical membrane pass occupies residues 53 to 73; that stretch reads FITFGAFTALVYGLISVGGYV. The Cytoplasmic portion of the chain corresponds to 74–82; sequence GDHILGTKR. A helical membrane pass occupies residues 83-103; it reads TIVLGAIVMAIGYYMIGLSIM. Over 104–106 the chain is Periplasmic; that stretch reads KPE. Residues 107–127 traverse the membrane as a helical segment; it reads LIFYALGTVAVGNGLFKANPA. Topologically, residues 128 to 146 are cytoplasmic; it reads SLLAKCYQPQDPRLDGAFT. The helical transmembrane segment at 147–167 threads the bilayer; the sequence is LFYMSINLGSLFSLSLAPVIA. Residues 168–172 lie on the Periplasmic side of the membrane; the sequence is EKYGY. Residues 173-193 traverse the membrane as a helical segment; it reads TVTYNICGIGLIIALLVYIAC. Topologically, residues 194–211 are cytoplasmic; the sequence is RRMVHNIGSAPDHHPVKP. Residues 212-232 form a helical membrane-spanning segment; it reads IGLIAVLIGSVVMVGVCAWLL. The Periplasmic segment spans residues 233–234; that stretch reads HN. Residues 235-255 traverse the membrane as a helical segment; it reads IKVANIALFAITTIVVLIFFW. The Cytoplasmic portion of the chain corresponds to 256–267; the sequence is QAFKQNRVGRNK. Residues 268 to 288 form a helical membrane-spanning segment; the sequence is MFVAFILMLQAVVFFILYNQM. The Periplasmic portion of the chain corresponds to 289 to 311; it reads PMSLNFFAINNVHHQILGFDVNP. A helical transmembrane segment spans residues 312 to 332; it reads VSFQAFNPFWIIIVSPILAVV. Residues 333 to 348 are Cytoplasmic-facing; it reads YTKLGAKGKDFSMPAK. A helical membrane pass occupies residues 349 to 369; sequence FTFGMFLCSLGFLTAAASGLF. Over 370–378 the chain is Periplasmic; it reads ADAQGITSP. A helical transmembrane segment spans residues 379-399; that stretch reads WFIVLVYLFQSVGELMISALG. Over 400–423 the chain is Cytoplasmic; that stretch reads LAMVAAFVPSYLTGFILGMWFLSQ. The chain crosses the membrane as a helical span at residues 424-444; that stretch reads AVASMLASHVAALTATPVGVT. The Periplasmic segment spans residues 445 to 455; the sequence is DPLQTLPIYMS. A helical transmembrane segment spans residues 456–476; that stretch reads VFGKIGVATLIVAIIMTFMVP. Topologically, residues 477-488 are cytoplasmic; sequence WLNRIMREEVKA.

This sequence belongs to the major facilitator superfamily. Proton-dependent oligopeptide transporter (POT/PTR) (TC 2.A.17) family. DtpB subfamily.

The protein resides in the cell inner membrane. Proton-dependent permease that transports di- and tripeptides. The protein is Dipeptide and tripeptide permease B of Xenorhabdus bovienii (strain SS-2004) (Xenorhabdus nematophila subsp. bovienii).